The primary structure comprises 194 residues: MPKPEIVFVTGNANKLREVSMILGGDASPFTLVNEPLDLEELQGADLQEIALAKLQQAVHALGPGRPVFVEDTALSFDEFNGLPGAYIKWFIKSMGLAKVVKMLDSFENKGAYAITTIAYADSKGQLHVFQGKTHGTIVDSRGHTNFGWDSIFQPDESQNNETYAEMAKEDKNKISQRGRAFAQLKEYLYNTGI.

10-15 (TGNANK) contributes to the ITP binding site. E41 contributes to the Mg(2+) binding site. Residues K54, 72 to 73 (DT), K89, 147 to 150 (FGWD), K172, and 177 to 178 (QR) each bind ITP.

It belongs to the HAM1 NTPase family. As to quaternary structure, homodimer. It depends on Mg(2+) as a cofactor. The cofactor is Mn(2+).

The protein resides in the cytoplasm. The protein localises to the nucleus. The enzyme catalyses ITP + H2O = IMP + diphosphate + H(+). The catalysed reaction is dITP + H2O = dIMP + diphosphate + H(+). It carries out the reaction XTP + H2O = XMP + diphosphate + H(+). In terms of biological role, pyrophosphatase that hydrolyzes non-canonical purine nucleotides such as inosine triphosphate (ITP), deoxyinosine triphosphate (dITP) or xanthosine 5'-triphosphate (XTP) to their respective monophosphate derivatives. The enzyme does not distinguish between the deoxy- and ribose forms. Probably excludes non-canonical purines from RNA and DNA precursor pools, thus preventing their incorporation into RNA and DNA and avoiding chromosomal lesions. The sequence is that of Inosine triphosphate pyrophosphatase from Kluyveromyces lactis (strain ATCC 8585 / CBS 2359 / DSM 70799 / NBRC 1267 / NRRL Y-1140 / WM37) (Yeast).